The following is a 618-amino-acid chain: DNA mismatch repair protein MutL (618 aa).

Residues 367–381 (EPTAAREPATPRYSG) are compositionally biased toward low complexity. The tract at residues 367–402 (EPTAAREPATPRYSGGASGGNGGRQSAGGWPHAQPG) is disordered. Over residues 382–392 (GASGGNGGRQS) the composition is skewed to gly residues.

It belongs to the DNA mismatch repair MutL/HexB family.

Its function is as follows. This protein is involved in the repair of mismatches in DNA. It is required for dam-dependent methyl-directed DNA mismatch repair. May act as a 'molecular matchmaker', a protein that promotes the formation of a stable complex between two or more DNA-binding proteins in an ATP-dependent manner without itself being part of a final effector complex. The polypeptide is DNA mismatch repair protein MutL (Salmonella heidelberg (strain SL476)).